The following is a 426-amino-acid chain: Putative phosphate permease CT_962 (426 aa).

Transmembrane regions (helical) follow at residues 1-21 (MWLLLVCVVVGGFYTAWNIGA), 37-57 (LTLKQAVLIAAVFEFLGAVLL), 83-103 (VFGMTAALLATGVWLQIASFC), 104-124 (GWPVSTTHAIVGAVLGFGIIL), 140-160 (VSWLASPIIGGYFAFLIFSFI), 183-203 (AIIIFALGLVLILSGAVAPVI), 207-227 (PALRIVCGLSLFAFFFTIWGI), 260-280 (LIVERIFAYLQMIIACFMSFA), 309-329 (VLLVFMSLGGLGLVCGLATWG), 365-385 (LGFPISTTHVVVGSVLGIGFA), and 399-419 (IVLSWFITVPAGAALSIVFFL).

This sequence belongs to the inorganic phosphate transporter (PiT) (TC 2.A.20) family.

It localises to the cell membrane. Functionally, potential transporter for phosphate. This is Putative phosphate permease CT_962 from Chlamydia trachomatis serovar D (strain ATCC VR-885 / DSM 19411 / UW-3/Cx).